A 357-amino-acid chain; its full sequence is Non-structural protein NS2 (357 aa).

2 disordered regions span residues 162 to 199 (QNER…AKEM) and 228 to 268 (LDEK…KTHI). 2 stretches are compositionally biased toward acidic residues: residues 230–243 (EKDE…EDEE) and 250–260 (DDDEQGEDASD).

Belongs to the orbivirus non-structural protein NS2 family.

In terms of biological role, single-stranded RNA-binding protein. The chain is Non-structural protein NS2 (Segment-8) from Antilocapra americana (Pronghorn).